We begin with the raw amino-acid sequence, 280 residues long: Band 7 protein AGAP004871 (280 aa).

The chain crosses the membrane as a helical span at residues 23–43; it reads ILIFLSWVLVVLTMPFSLLVC.

The protein belongs to the band 7/mec-2 family.

The protein localises to the membrane. In Anopheles gambiae (African malaria mosquito), this protein is Band 7 protein AGAP004871.